A 155-amino-acid polypeptide reads, in one-letter code: Xanthine-guanine phosphoribosyltransferase (155 aa).

5-phospho-alpha-D-ribose 1-diphosphate-binding positions include 37-38 and 91-99; these read RG and DDLVDTGNT. Asp-92 serves as a coordination point for Mg(2+). Positions 95 and 138 each coordinate guanine. Positions 95 and 138 each coordinate xanthine. Residues 95–99 and 137–138 each bind GMP; these read DTGNT and WI.

This sequence belongs to the purine/pyrimidine phosphoribosyltransferase family. XGPT subfamily. As to quaternary structure, homotetramer. The cofactor is Mg(2+).

The protein resides in the cell inner membrane. The catalysed reaction is GMP + diphosphate = guanine + 5-phospho-alpha-D-ribose 1-diphosphate. It carries out the reaction XMP + diphosphate = xanthine + 5-phospho-alpha-D-ribose 1-diphosphate. The enzyme catalyses IMP + diphosphate = hypoxanthine + 5-phospho-alpha-D-ribose 1-diphosphate. It participates in purine metabolism; GMP biosynthesis via salvage pathway; GMP from guanine: step 1/1. Its pathway is purine metabolism; XMP biosynthesis via salvage pathway; XMP from xanthine: step 1/1. Acts on guanine, xanthine and to a lesser extent hypoxanthine. Functionally, purine salvage pathway enzyme that catalyzes the transfer of the ribosyl-5-phosphate group from 5-phospho-alpha-D-ribose 1-diphosphate (PRPP) to the N9 position of the 6-oxopurines guanine and xanthine to form the corresponding ribonucleotides GMP (guanosine 5'-monophosphate) and XMP (xanthosine 5'-monophosphate), with the release of PPi. To a lesser extent, also acts on hypoxanthine. The protein is Xanthine-guanine phosphoribosyltransferase of Haemophilus influenzae (strain ATCC 51907 / DSM 11121 / KW20 / Rd).